The chain runs to 545 residues: T-complex protein 1 subunit gamma (545 aa).

Met-1 is modified (N-acetylmethionine). The interval 1 to 24 is disordered; it reads MMGHRPVLVLSQNTKRESGRKVQS. Ser-11 is modified (phosphoserine). Lys-15 participates in a covalent cross-link: Glycyl lysine isopeptide (Lys-Gly) (interchain with G-Cter in SUMO2). Gly-42 provides a ligand contact to ADP. Gly-42 contributes to the ATP binding site. Mg(2+) is bound at residue Asp-93. The ADP site is built by Gly-94, Thr-95, Thr-96, Ser-97, Thr-162, and Lys-163. Gly-94, Thr-95, and Thr-96 together coordinate ATP. Residue Ser-170 is modified to Phosphoserine. Lys-222 is subject to N6-acetyllysine. Residues Ser-243 and Ser-244 each carry the phosphoserine modification. Phosphotyrosine is present on Tyr-247. Glycyl lysine isopeptide (Lys-Gly) (interchain with G-Cter in SUMO2) cross-links involve residues Lys-248 and Lys-249. A Phosphoserine modification is found at Ser-252. A disulfide bridge links Cys-366 with Cys-372. A Glycyl lysine isopeptide (Lys-Gly) (interchain with G-Cter in SUMO2) cross-link involves residue Lys-381. Gly-411 serves as a coordination point for ADP. An ATP-binding site is contributed by Gly-411. Phosphothreonine is present on residues Thr-430 and Thr-459. ADP is bound by residues Gly-482, Glu-483, Glu-497, and Lys-502. Residue Gly-482 participates in ATP binding. Glu-497 contributes to the ATP binding site. The segment at 526 to 545 is disordered; the sequence is HKKKGDDQSRQGGAPDAGQE.

Belongs to the TCP-1 chaperonin family. Component of the chaperonin-containing T-complex (TRiC), a hexadecamer composed of two identical back-to-back stacked rings enclosing a protein folding chamber. Each ring is made up of eight different subunits: TCP1/CCT1, CCT2, CCT3, CCT4, CCT5, CCT6A/CCT6, CCT7, CCT8. Interacts with PACRG. Interacts with DNAAF4. Interacts with DLEC1.

It is found in the cytoplasm. The catalysed reaction is ATP + H2O = ADP + phosphate + H(+). Functionally, component of the chaperonin-containing T-complex (TRiC), a molecular chaperone complex that assists the folding of actin, tubulin and other proteins upon ATP hydrolysis. The TRiC complex mediates the folding of WRAP53/TCAB1, thereby regulating telomere maintenance. As part of the TRiC complex may play a role in the assembly of BBSome, a complex involved in ciliogenesis regulating transports vesicles to the cilia. This is T-complex protein 1 subunit gamma (CCT3) from Homo sapiens (Human).